A 158-amino-acid polypeptide reads, in one-letter code: Large ribosomal subunit protein uL11 (158 aa).

The protein belongs to the universal ribosomal protein uL11 family. As to quaternary structure, part of the ribosomal stalk of the 50S ribosomal subunit. Interacts with L10 and the large rRNA to form the base of the stalk. L10 forms an elongated spine to which L12 dimers bind in a sequential fashion forming a multimeric L10(L12)X complex.

Its function is as follows. Forms part of the ribosomal stalk which helps the ribosome interact with GTP-bound translation factors. The chain is Large ribosomal subunit protein uL11 from Methanosphaerula palustris (strain ATCC BAA-1556 / DSM 19958 / E1-9c).